We begin with the raw amino-acid sequence, 97 residues long: Large ribosomal subunit protein eL21 (97 aa).

A disordered region spans residues 1 to 26; that stretch reads MQKSEGFRSKTRYKLQKHPRQKGMAP. Positions 9 to 21 are enriched in basic residues; that stretch reads SKTRYKLQKHPRQ.

The protein belongs to the eukaryotic ribosomal protein eL21 family.

This Methanococcus maripaludis (strain C6 / ATCC BAA-1332) protein is Large ribosomal subunit protein eL21.